Reading from the N-terminus, the 445-residue chain is Exodeoxyribonuclease 7 large subunit (445 aa).

Belongs to the XseA family. Heterooligomer composed of large and small subunits.

The protein resides in the cytoplasm. The enzyme catalyses Exonucleolytic cleavage in either 5'- to 3'- or 3'- to 5'-direction to yield nucleoside 5'-phosphates.. In terms of biological role, bidirectionally degrades single-stranded DNA into large acid-insoluble oligonucleotides, which are then degraded further into small acid-soluble oligonucleotides. This Staphylococcus saprophyticus subsp. saprophyticus (strain ATCC 15305 / DSM 20229 / NCIMB 8711 / NCTC 7292 / S-41) protein is Exodeoxyribonuclease 7 large subunit.